We begin with the raw amino-acid sequence, 98 residues long: MRTYEVMYIVRPNIEEDAKKALVERFNGILATEGAEVLEAKDWGKRRLAYEINDFKDGFYNIVRVKSDNNKATDEFQRLAKISDDIIRYMVIREDEDK.

It belongs to the bacterial ribosomal protein bS6 family.

In terms of biological role, binds together with bS18 to 16S ribosomal RNA. The chain is Small ribosomal subunit protein bS6 from Staphylococcus aureus (strain NCTC 8325 / PS 47).